The primary structure comprises 101 residues: Small ribosomal subunit protein uS14 (101 aa).

This sequence belongs to the universal ribosomal protein uS14 family. Part of the 30S ribosomal subunit. Contacts proteins S3 and S10.

Its function is as follows. Binds 16S rRNA, required for the assembly of 30S particles and may also be responsible for determining the conformation of the 16S rRNA at the A site. The protein is Small ribosomal subunit protein uS14 of Enterobacter sp. (strain 638).